Consider the following 73-residue polypeptide: V-type proton ATPase subunit e (73 aa).

At 1–3 (MSS) the chain is on the lumenal side. A helical transmembrane segment spans residues 4 to 24 (FYTVVGVFIVVSAMSVLFWIM). At 25-35 (APKNNQAVWRS) the chain is on the cytoplasmic side. Residues 36 to 56 (TVILTLAMMFLMWAITFLCQL) form a helical membrane-spanning segment. The Lumenal segment spans residues 57–73 (HPLVAPRRSDLRPEFAE).

It belongs to the V-ATPase e1/e2 subunit family. In terms of assembly, V-ATPase is a heteromultimeric enzyme composed of a peripheral catalytic V1 complex (components A to H) attached to an integral membrane V0 proton pore complex (components: a, c, c', c'', d, e, f and VOA1).

Its subcellular location is the vacuole membrane. Subunit of the V0 complex of vacuolar(H+)-ATPase (V-ATPase), a multisubunit enzyme composed of a peripheral complex (V1) that hydrolyzes ATP and a membrane integral complex (V0) that translocates protons. V-ATPase is responsible for acidifying and maintaining the pH of intracellular compartments. In Saccharomyces cerevisiae (strain ATCC 204508 / S288c) (Baker's yeast), this protein is V-type proton ATPase subunit e (VMA9).